The chain runs to 663 residues: Guanine nucleotide exchange factor subunit RGP1 (663 aa).

6 positions are modified to phosphoserine: Ser-351, Ser-354, Ser-357, Ser-363, Ser-364, and Ser-370. The disordered stretch occupies residues Gly-412–Ala-443. The segment covering His-426–Arg-440 has biased composition (polar residues).

This sequence belongs to the RGP1 family. In terms of assembly, forms a complex with RIC1.

It localises to the golgi apparatus. The RIC1-RGP1 complex acts as a guanine nucleotide exchange factor (GEF), which activates YPT6 by exchanging bound GDP for free GTP. It is thereby required for efficient fusion of endosome-derived vesicles with the Golgi. The RIC1-RGP1 participates in the recycling of SNC1, presumably by mediating fusion of endosomal vesicles with the Golgi compartment. Its function is as follows. Required for proper mitotic growth. In Saccharomyces cerevisiae (strain ATCC 204508 / S288c) (Baker's yeast), this protein is Guanine nucleotide exchange factor subunit RGP1.